The chain runs to 315 residues: MSEQFEHISVLLHESVDGLAIKPDGIYIDGTFGRGGHSRLILSHLGENGRLYGIDRDPQAIAEAQTIDDPRFSIIHGPFSGMAQYMEERDLIGRVDGVLLDLGVSSPQLDDAERGFSFMRDGPLDMRMDPTSGISAAEWLAEAEADDIAWVLKEFGEERFAKRIARGIVEHRENPDKKPLTRTKELAALISDVSPFRDKHKHPATRSFQAIRIYINSELDEIETALNGAVKVLAPQGRLSVISFHSLEDRMVKRFIRKNSKGPEVPAGFPLTEDQIKALGSADLKMASKAIKPSKDELGDNKRARSSVLRLAERL.

S-adenosyl-L-methionine is bound by residues 35-37 (GGH), Asp55, Phe79, Asp101, and Gln108.

This sequence belongs to the methyltransferase superfamily. RsmH family.

Its subcellular location is the cytoplasm. The enzyme catalyses cytidine(1402) in 16S rRNA + S-adenosyl-L-methionine = N(4)-methylcytidine(1402) in 16S rRNA + S-adenosyl-L-homocysteine + H(+). Specifically methylates the N4 position of cytidine in position 1402 (C1402) of 16S rRNA. This is Ribosomal RNA small subunit methyltransferase H from Photobacterium profundum (strain SS9).